We begin with the raw amino-acid sequence, 526 residues long: MSDFYQDFNKRRTFAIISHPDAGKTTVTEKLLLFGGAIQLAGTVKGRKADRHATSDWMEMEKERGISITTSVMQFIHNQHVINLLDTPGHEDFSEDTYRTLTAVDSALMVIDVAKGVEERTVKLMEVCRLRDTPIMTFINKLDREGREPIDLLDEVESVLGIQCAPITWPVGMGKRFKGIYHRYQDIIYLYQQGSNAKKVEAMQIKGLDNPQLDELIGDSADELREEIELVKGASHGFNLEDYLAGKMTPVYFGSAINNFGIKELLDDFVEYAPGPQPRATQERVVSPNEETFSGFVFKIQANMDPKHRDRIAFLRVCSGAYKKGMKLSHLRIGKEVQISNALTFMAGDRSHTELALAGDIIGLHNHGTIRIGDTFTQGEQLKFTGIPNFAPELFRLVRLRDPLKSKALLKGLIELSEEGATQVFRPLNSNQLILGAVGILQFDVVAHRLKHEYKVDCIYESVNVTCARWVYSEDDKAMSEFRTKAYDYLALDGGDMLMYLAPTKVNLTMAEERYPKIKFCATREH.

One can recognise a tr-type G domain in the interval N9 to Q277. Residues S18–T25, D86–H90, and N140–D143 contribute to the GTP site.

This sequence belongs to the TRAFAC class translation factor GTPase superfamily. Classic translation factor GTPase family. PrfC subfamily.

It localises to the cytoplasm. In terms of biological role, increases the formation of ribosomal termination complexes and stimulates activities of RF-1 and RF-2. It binds guanine nucleotides and has strong preference for UGA stop codons. It may interact directly with the ribosome. The stimulation of RF-1 and RF-2 is significantly reduced by GTP and GDP, but not by GMP. The protein is Peptide chain release factor 3 of Legionella pneumophila (strain Corby).